Reading from the N-terminus, the 459-residue chain is GTPase Der (459 aa).

EngA-type G domains are found at residues 4 to 169 and 179 to 355; these read PLVA…PEVT and IAVS…AAHR. Residues 10 to 17, 57 to 61, 120 to 123, 185 to 192, 232 to 236, and 297 to 300 each bind GTP; these read GRPNVGKS, DTGGL, NKCE, DTAGI, and NKWD. The region spanning 356–441 is the KH-like domain; sequence KRVPTAVVNE…PIRFLWRGKS (86 aa).

Belongs to the TRAFAC class TrmE-Era-EngA-EngB-Septin-like GTPase superfamily. EngA (Der) GTPase family. In terms of assembly, associates with the 50S ribosomal subunit.

Functionally, GTPase that plays an essential role in the late steps of ribosome biogenesis. This is GTPase Der from Synechococcus sp. (strain JA-2-3B'a(2-13)) (Cyanobacteria bacterium Yellowstone B-Prime).